The sequence spans 211 residues: Endonuclease III (211 aa).

The region spanning 108-127 is the HhH domain; the sequence is RAALEALPGVGRKTANVVLN. 4 residues coordinate [4Fe-4S] cluster: Cys-187, Cys-194, Cys-197, and Cys-203.

Belongs to the Nth/MutY family. [4Fe-4S] cluster serves as cofactor.

The enzyme catalyses 2'-deoxyribonucleotide-(2'-deoxyribose 5'-phosphate)-2'-deoxyribonucleotide-DNA = a 3'-end 2'-deoxyribonucleotide-(2,3-dehydro-2,3-deoxyribose 5'-phosphate)-DNA + a 5'-end 5'-phospho-2'-deoxyribonucleoside-DNA + H(+). Its function is as follows. DNA repair enzyme that has both DNA N-glycosylase activity and AP-lyase activity. The DNA N-glycosylase activity releases various damaged pyrimidines from DNA by cleaving the N-glycosidic bond, leaving an AP (apurinic/apyrimidinic) site. The AP-lyase activity cleaves the phosphodiester bond 3' to the AP site by a beta-elimination, leaving a 3'-terminal unsaturated sugar and a product with a terminal 5'-phosphate. This Escherichia coli O6:H1 (strain CFT073 / ATCC 700928 / UPEC) protein is Endonuclease III.